Reading from the N-terminus, the 180-residue chain is ATP-dependent protease subunit HslV (180 aa).

Threonine 8 is an active-site residue. Residues serine 165, cysteine 168, and threonine 171 each coordinate Na(+).

It belongs to the peptidase T1B family. HslV subfamily. As to quaternary structure, a double ring-shaped homohexamer of HslV is capped on each side by a ring-shaped HslU homohexamer. The assembly of the HslU/HslV complex is dependent on binding of ATP.

The protein resides in the cytoplasm. It catalyses the reaction ATP-dependent cleavage of peptide bonds with broad specificity.. With respect to regulation, allosterically activated by HslU binding. In terms of biological role, protease subunit of a proteasome-like degradation complex believed to be a general protein degrading machinery. This is ATP-dependent protease subunit HslV from Staphylococcus saprophyticus subsp. saprophyticus (strain ATCC 15305 / DSM 20229 / NCIMB 8711 / NCTC 7292 / S-41).